The primary structure comprises 1806 residues: uncharacterized protein (1806 aa).

Disordered stretches follow at residues glutamate 38–phenylalanine 131 and lysine 158–proline 282. A compositionally biased stretch (low complexity) spans lysine 51–proline 70. Residues serine 52, serine 56, serine 79, serine 87, serine 88, serine 92, and serine 128 each carry the phosphoserine modification. A compositionally biased stretch (low complexity) spans proline 82–glutamate 100. Residues aspartate 226–proline 236 show a composition bias toward basic and acidic residues. Residues serine 244 and serine 284 each carry the phosphoserine modification. 4 disordered regions span residues arginine 299 to arginine 320, lysine 355 to tryptophan 431, serine 456 to aspartate 604, and glutamine 627 to proline 696. A Phosphoserine modification is found at serine 366. A Phosphothreonine modification is found at threonine 378. Serine 384 bears the Phosphoserine mark. Residues tryptophan 386 to alanine 400 show a composition bias toward basic and acidic residues. Serine 404 carries the phosphoserine modification. The segment covering glutamate 412 to aspartate 422 has biased composition (basic and acidic residues). Low complexity predominate over residues serine 456–proline 470. Serine 458 and serine 508 each carry phosphoserine. Residues leucine 514 to glutamate 523 show a composition bias toward polar residues. 2 stretches are compositionally biased toward basic and acidic residues: residues valine 524–serine 549 and threonine 564–glutamate 573. Threonine 600 carries the post-translational modification Phosphothreonine. Composition is skewed to basic and acidic residues over residues alanine 641–proline 652 and aspartate 661–arginine 674. The residue at position 749 (serine 749) is a Phosphoserine. Disordered stretches follow at residues glutamine 860–threonine 901, serine 969–lysine 989, and glutamine 1000–serine 1019. Residues arginine 889–arginine 900 are compositionally biased toward polar residues. 2 positions are modified to phosphoserine: serine 969 and serine 981. Positions serine 969–aspartate 978 are enriched in basic and acidic residues. Threonine 1059 carries the post-translational modification Phosphothreonine. 2 positions are modified to phosphoserine: serine 1063 and serine 1154. A disordered region spans residues arginine 1134 to lysine 1178. The span at proline 1142–leucine 1166 shows a compositional bias: polar residues. Threonine 1163 carries the post-translational modification Phosphothreonine. The span at arginine 1169–lysine 1178 shows a compositional bias: basic and acidic residues. 2 positions are modified to phosphothreonine: threonine 1179 and threonine 1185. 2 disordered regions span residues proline 1216–serine 1265 and lysine 1291–valine 1493. The residue at position 1224 (serine 1224) is a Phosphoserine. The residue at position 1226 (threonine 1226) is a Phosphothreonine. Basic and acidic residues-rich tracts occupy residues glutamate 1244–proline 1254 and aspartate 1317–alanine 1331. Phosphoserine is present on serine 1366. 2 stretches are compositionally biased toward basic and acidic residues: residues aspartate 1393–serine 1410 and histidine 1426–lysine 1437. Serine 1441 carries the post-translational modification Phosphoserine. A compositionally biased stretch (basic and acidic residues) spans aspartate 1462–proline 1483. 2 positions are modified to phosphoserine: serine 1488 and serine 1506. Disordered stretches follow at residues glutamine 1512–aspartate 1627 and alanine 1642–valine 1806. Residues threonine 1522–valine 1531 show a composition bias toward basic and acidic residues. Polar residues predominate over residues glutamine 1537 to proline 1568. 2 positions are modified to phosphoserine: serine 1555 and serine 1662. Positions leucine 1649–serine 1666 are enriched in basic residues. Composition is skewed to basic and acidic residues over residues arginine 1667–leucine 1677 and aspartate 1689–proline 1714. Serine 1701, serine 1757, serine 1760, and serine 1786 each carry phosphoserine. Over residues proline 1753–proline 1764 the composition is skewed to low complexity.

This is an uncharacterized protein from Homo sapiens (Human).